Consider the following 195-residue polypeptide: Shikimate kinase (195 aa).

Residue 31–36 (GAGKSC) participates in ATP binding. Residue S35 coordinates Mg(2+). Residues D53, R77, and G99 each coordinate substrate. An ATP-binding site is contributed by R137. R156 lines the substrate pocket.

The protein belongs to the shikimate kinase family. Monomer. Requires Mg(2+) as cofactor.

It is found in the cytoplasm. It carries out the reaction shikimate + ATP = 3-phosphoshikimate + ADP + H(+). It functions in the pathway metabolic intermediate biosynthesis; chorismate biosynthesis; chorismate from D-erythrose 4-phosphate and phosphoenolpyruvate: step 5/7. In terms of biological role, catalyzes the specific phosphorylation of the 3-hydroxyl group of shikimic acid using ATP as a cosubstrate. This is Shikimate kinase from Paramagnetospirillum magneticum (strain ATCC 700264 / AMB-1) (Magnetospirillum magneticum).